Here is a 944-residue protein sequence, read N- to C-terminus: Valine--tRNA ligase (944 aa).

Positions 43-53 (PNVTGTLHMGH) match the 'HIGH' region motif. The 'KMSKS' region signature appears at 550 to 554 (KMSKS). Position 553 (lysine 553) interacts with ATP. Positions 878–944 (LVDMDAERTR…TGLREQRAKL (67 aa)) form a coiled coil.

This sequence belongs to the class-I aminoacyl-tRNA synthetase family. ValS type 1 subfamily. As to quaternary structure, monomer.

Its subcellular location is the cytoplasm. It catalyses the reaction tRNA(Val) + L-valine + ATP = L-valyl-tRNA(Val) + AMP + diphosphate. Catalyzes the attachment of valine to tRNA(Val). As ValRS can inadvertently accommodate and process structurally similar amino acids such as threonine, to avoid such errors, it has a 'posttransfer' editing activity that hydrolyzes mischarged Thr-tRNA(Val) in a tRNA-dependent manner. This is Valine--tRNA ligase from Xanthomonas campestris pv. campestris (strain B100).